Here is a 123-residue protein sequence, read N- to C-terminus: Large ribosomal subunit protein uL14 (123 aa).

Belongs to the universal ribosomal protein uL14 family. As to quaternary structure, part of the 50S ribosomal subunit. Forms a cluster with proteins L3 and L19. In the 70S ribosome, L14 and L19 interact and together make contacts with the 16S rRNA in bridges B5 and B8.

Binds to 23S rRNA. Forms part of two intersubunit bridges in the 70S ribosome. The chain is Large ribosomal subunit protein uL14 from Vibrio cholerae serotype O1 (strain ATCC 39541 / Classical Ogawa 395 / O395).